We begin with the raw amino-acid sequence, 40 residues long: Beta-defensin 2 (40 aa).

Intrachain disulfides connect Cys7–Cys36, Cys14–Cys29, and Cys19–Cys37.

It belongs to the beta-defensin family. Neutrophilic granules.

It is found in the secreted. Has bactericidal activity. Active against E.coli ML35 and S.aureus 502A. This is Beta-defensin 2 (DEFB2) from Bos taurus (Bovine).